Reading from the N-terminus, the 276-residue chain is NAD kinase (276 aa).

D66 functions as the Proton acceptor in the catalytic mechanism. Residues 66 to 67 (DG), 139 to 140 (ND), D168, 179 to 184 (TAYNIS), and Q234 each bind NAD(+).

This sequence belongs to the NAD kinase family. It depends on a divalent metal cation as a cofactor.

It is found in the cytoplasm. It catalyses the reaction NAD(+) + ATP = ADP + NADP(+) + H(+). Involved in the regulation of the intracellular balance of NAD and NADP, and is a key enzyme in the biosynthesis of NADP. Catalyzes specifically the phosphorylation on 2'-hydroxyl of the adenosine moiety of NAD to yield NADP. The chain is NAD kinase from Campylobacter lari (strain RM2100 / D67 / ATCC BAA-1060).